The sequence spans 200 residues: Recombination protein RecR (200 aa).

The C4-type zinc finger occupies 59 to 74 (CDICGNVCESSPCPVC). Positions 82–177 (SVICVVEEPK…KVTRLASGLP (96 aa)) constitute a Toprim domain.

This sequence belongs to the RecR family.

Functionally, may play a role in DNA repair. It seems to be involved in an RecBC-independent recombinational process of DNA repair. It may act with RecF and RecO. The chain is Recombination protein RecR from Bifidobacterium longum (strain DJO10A).